The sequence spans 1122 residues: DNA polymerase (1122 aa).

The protein belongs to the DNA polymerase type-B family. In terms of assembly, heterodimer with the terminal protein; this heterodimer binds to bp 9 to 18 of the genome. Forms a complex with viral pTP, DBP and hosts NFIA and POU2F1/OCT1 for initiation of replication.

Its subcellular location is the host nucleus. It carries out the reaction DNA(n) + a 2'-deoxyribonucleoside 5'-triphosphate = DNA(n+1) + diphosphate. Eukaryotic-type DNA polymerase involved in viral genomic replication. DNA synthesis is protein primed, and acts in a strand displacement replication. Assembles in complex with viral pTP, DBP, host NFIA and host POU2F1/OCT1 on viral origin of replication. The polymerase covalently transfers dCMP onto pTP, thereby initiating complementary strand synthesis. The protein is DNA polymerase of Human adenovirus B serotype 7 (HAdV-7).